The chain runs to 1149 residues: Structural maintenance of chromosomes protein 6 homolog smc-6 (1149 aa).

77–84 (GPNGSGKS) contacts ATP. Positions 309–460 (LQDETKKEYA…EEEKYTIQRD (152 aa)) form a coiled coil. The interval 461-687 (INQLRRKIEQ…DVDEGALARL (227 aa)) is flexible hinge. A coiled-coil region spans residues 714-920 (YNERDQTKAA…AVDRATVGCD (207 aa)). Disordered regions lie at residues 875 to 900 (NDKK…STTE) and 1026 to 1060 (EVDE…VRDL). Positions 1026 to 1038 (EVDEHSYDDDSDD) are enriched in acidic residues. The segment covering 1042–1058 (PRRKKSKKSGQKKKRVR) has biased composition (basic residues).

Belongs to the SMC family. SMC6 subfamily. In terms of assembly, interacts with smc-5. As to expression, expressed in the germline (at protein level).

Its subcellular location is the nucleus. The protein localises to the chromosome. In terms of biological role, core component of the smc-5/smc-6 complex. Involved in DNA double-strand break repair by promoting sister-chromatid homologous recombination during meiosis. Also plays a role in the DNA damage repair of ultraviolet (UV) radiation-induced DNA lesions. Promotes efficient DNA replication. The protein is Structural maintenance of chromosomes protein 6 homolog smc-6 of Caenorhabditis elegans.